The chain runs to 615 residues: uncharacterized protein (615 aa).

3 stretches are compositionally biased toward polar residues: residues 1–11, 41–55, and 128–140; these read MSETSSNSPAS, LSQNAQGASKSSSKV, and TSGSSTGLSNAPP. Disordered stretches follow at residues 1 to 61 and 97 to 149; these read MSET…QALV and HQNH…KASS. Ser-149 and Ser-152 each carry phosphoserine. A disordered region spans residues 181 to 217; that stretch reads LIHPEQTDRGLPYAPDEKFHNSGSLKLPKGASLEDLS. Ser-219 and Ser-275 each carry phosphoserine. 3 disordered regions span residues 266-481, 493-565, and 586-615; these read KPLA…KFTG, RLQK…KPSF, and GVETRKEVEPKEEAVIPEEDVEVEVETEEQ. Polar residues predominate over residues 272 to 283; that stretch reads RQRSTADLTESD. Phosphothreonine is present on residues Thr-276 and Thr-297. Over residues 312–323 the composition is skewed to basic and acidic residues; that stretch reads EAEKGFYTKDGE. Residues 356-376 show a composition bias toward low complexity; the sequence is PSLSSASQPSAASSSSSSEPS. The segment covering 505–522 has biased composition (polar residues); it reads PNKSKSPSGTKSPASGET. Thr-514 bears the Phosphothreonine mark. Ser-516 is subject to Phosphoserine. Basic and acidic residues predominate over residues 586–599; the sequence is GVETRKEVEPKEEA. Acidic residues predominate over residues 600–615; it reads VIPEEDVEVEVETEEQ.

This is an uncharacterized protein from Schizosaccharomyces pombe (strain 972 / ATCC 24843) (Fission yeast).